We begin with the raw amino-acid sequence, 205 residues long: Peptidyl-tRNA hydrolase (205 aa).

Position 18 (Tyr18) interacts with tRNA. Catalysis depends on His23, which acts as the Proton acceptor. 3 residues coordinate tRNA: Tyr69, Asn71, and Asn117.

This sequence belongs to the PTH family. Monomer.

It is found in the cytoplasm. The catalysed reaction is an N-acyl-L-alpha-aminoacyl-tRNA + H2O = an N-acyl-L-amino acid + a tRNA + H(+). Hydrolyzes ribosome-free peptidyl-tRNAs (with 1 or more amino acids incorporated), which drop off the ribosome during protein synthesis, or as a result of ribosome stalling. In terms of biological role, catalyzes the release of premature peptidyl moieties from peptidyl-tRNA molecules trapped in stalled 50S ribosomal subunits, and thus maintains levels of free tRNAs and 50S ribosomes. The protein is Peptidyl-tRNA hydrolase of Synechococcus sp. (strain CC9605).